The sequence spans 93 residues: Small ribosomal subunit protein uS15 (93 aa).

The protein belongs to the universal ribosomal protein uS15 family. Part of the 30S ribosomal subunit. Forms a bridge to the 50S subunit in the 70S ribosome, contacting the 23S rRNA.

Its function is as follows. One of the primary rRNA binding proteins, it binds directly to 16S rRNA where it helps nucleate assembly of the platform of the 30S subunit by binding and bridging several RNA helices of the 16S rRNA. In terms of biological role, forms an intersubunit bridge (bridge B4) with the 23S rRNA of the 50S subunit in the ribosome. This chain is Small ribosomal subunit protein uS15, found in Anaplasma marginale (strain St. Maries).